The primary structure comprises 468 residues: 3-isopropylmalate dehydratase large subunit (468 aa).

[4Fe-4S] cluster contacts are provided by Cys347, Cys407, and Cys410.

This sequence belongs to the aconitase/IPM isomerase family. LeuC type 1 subfamily. In terms of assembly, heterodimer of LeuC and LeuD. [4Fe-4S] cluster serves as cofactor.

The catalysed reaction is (2R,3S)-3-isopropylmalate = (2S)-2-isopropylmalate. It functions in the pathway amino-acid biosynthesis; L-leucine biosynthesis; L-leucine from 3-methyl-2-oxobutanoate: step 2/4. Its function is as follows. Catalyzes the isomerization between 2-isopropylmalate and 3-isopropylmalate, via the formation of 2-isopropylmaleate. This Campylobacter jejuni subsp. jejuni serotype O:23/36 (strain 81-176) protein is 3-isopropylmalate dehydratase large subunit.